The sequence spans 341 residues: Ubiquinone biosynthesis protein COQ4, mitochondrial (341 aa).

Residues 1-16 constitute a mitochondrion transit peptide; sequence MLSRISSVRIGTQVRQ. Zn(2+)-binding residues include histidine 220, aspartate 221, histidine 224, and glutamate 236.

It belongs to the COQ4 family. In terms of assembly, component of a multi-subunit COQ enzyme complex, composed of at least COQ3, COQ4, COQ5, COQ6, COQ7 and COQ9. Zn(2+) serves as cofactor.

The protein resides in the mitochondrion inner membrane. It catalyses the reaction a 4-hydroxy-3-methoxy-5-(all-trans-polyprenyl)benzoate + H(+) = a 2-methoxy-6-(all-trans-polyprenyl)phenol + CO2. The protein operates within cofactor biosynthesis; ubiquinone biosynthesis. In terms of biological role, lyase that catalyzes the C1-decarboxylation of 4-hydroxy-3-methoxy-5-(all-trans-polyprenyl)benzoic acid into 2-methoxy-6-(all-trans-polyprenyl)phenol during ubiquinone biosynthesis. The polypeptide is Ubiquinone biosynthesis protein COQ4, mitochondrial (Vanderwaltozyma polyspora (strain ATCC 22028 / DSM 70294 / BCRC 21397 / CBS 2163 / NBRC 10782 / NRRL Y-8283 / UCD 57-17) (Kluyveromyces polysporus)).